Reading from the N-terminus, the 419-residue chain is Histone acetyltransferase type B subunit 2 (419 aa).

WD repeat units lie at residues 131-171 (PHDG…VEAL), 177-217 (YHTE…KNIK), 225-265 (AHTD…IIHN), 267-307 (NTKK…NPLY), and 311-351 (GHED…AEQT). The segment at 353 to 357 (DEIED) is interaction with the histone H4 N-terminus. The stretch at 368-408 (GHKTSINDIAVNPNINWLVASAEEDNIVQIWKCSSNIPRIG) is one WD 6 repeat.

Belongs to the WD repeat RBAP46/RBAP48/MSI1 family. Component of the HAT-B complex composed of at least HAT1 and HAT2. The HAT-B complex binds to histone H4 tail.

It localises to the cytoplasm. The protein localises to the nucleus. Regulatory subunit of the histone acetylase B (HAT-B) complex. The complex acetylates Lys-12 of histone H4 which is required for telomeric silencing. The polypeptide is Histone acetyltransferase type B subunit 2 (HAT2) (Candida glabrata (strain ATCC 2001 / BCRC 20586 / JCM 3761 / NBRC 0622 / NRRL Y-65 / CBS 138) (Yeast)).